A 424-amino-acid chain; its full sequence is Steryl acetyl hydrolase 1 (424 aa).

Ala-2 is modified (N-acetylalanine). Residues Ala-2–His-45 are Cytoplasmic-facing. Residues Leu-46–Leu-66 traverse the membrane as a helical; Signal-anchor for type II membrane protein segment. Over Asp-67–Ser-424 the chain is Lumenal. Asn-85 is a glycosylation site (N-linked (GlcNAc...) asparagine). An Involved in the stabilization of the negatively charged intermediate by the formation of the oxyanion hole motif is present at residues His-176–Gly-178. The active site involves Ser-250. N-linked (GlcNAc...) asparagine glycosylation occurs at Asn-283. The active site involves His-395. A glycan (N-linked (GlcNAc...) asparagine) is linked at Asn-401.

This sequence belongs to the 'GDXG' lipolytic enzyme family.

Its subcellular location is the endoplasmic reticulum membrane. In terms of biological role, required for the deacetylation of acetylated sterols. Involved in the resistance to eugenol and pregnenolone toxicity. The sequence is that of Steryl acetyl hydrolase 1 (SAY1) from Saccharomyces cerevisiae (strain ATCC 204508 / S288c) (Baker's yeast).